The primary structure comprises 326 residues: Phospho-N-acetylmuramoyl-pentapeptide-transferase (326 aa).

9 consecutive transmembrane segments (helical) span residues 3–23 (ISIS…PAFI), 51–71 (TMGG…FALF), 79–99 (VGMI…DDFL), 115–135 (LALQ…GGDI), 138–158 (VFGY…FWLV), 169–189 (GVDG…GVIA), 195–215 (MDIL…FIFN), 221–243 (VFMG…MALH), and 306–326 (FFFW…LYLM).

The protein belongs to the glycosyltransferase 4 family. MraY subfamily. Requires Mg(2+) as cofactor.

It is found in the cell membrane. The catalysed reaction is UDP-N-acetyl-alpha-D-muramoyl-L-alanyl-gamma-D-glutamyl-L-lysyl-D-alanyl-D-alanine + di-trans,octa-cis-undecaprenyl phosphate = Mur2Ac(oyl-L-Ala-gamma-D-Glu-L-Lys-D-Ala-D-Ala)-di-trans,octa-cis-undecaprenyl diphosphate + UMP. Its pathway is cell wall biogenesis; peptidoglycan biosynthesis. Functionally, catalyzes the initial step of the lipid cycle reactions in the biosynthesis of the cell wall peptidoglycan: transfers peptidoglycan precursor phospho-MurNAc-pentapeptide from UDP-MurNAc-pentapeptide onto the lipid carrier undecaprenyl phosphate, yielding undecaprenyl-pyrophosphoryl-MurNAc-pentapeptide, known as lipid I. The polypeptide is Phospho-N-acetylmuramoyl-pentapeptide-transferase (Streptococcus pneumoniae (strain 70585)).